Reading from the N-terminus, the 319-residue chain is tRNA U34 carboxymethyltransferase (319 aa).

Residues Lys88, Trp102, Lys107, Gly126, 176 to 177 (LE), Met192, Tyr196, and Arg311 each bind carboxy-S-adenosyl-L-methionine.

It belongs to the class I-like SAM-binding methyltransferase superfamily. CmoB family. As to quaternary structure, homotetramer.

The catalysed reaction is carboxy-S-adenosyl-L-methionine + 5-hydroxyuridine(34) in tRNA = 5-carboxymethoxyuridine(34) in tRNA + S-adenosyl-L-homocysteine + H(+). Its function is as follows. Catalyzes carboxymethyl transfer from carboxy-S-adenosyl-L-methionine (Cx-SAM) to 5-hydroxyuridine (ho5U) to form 5-carboxymethoxyuridine (cmo5U) at position 34 in tRNAs. This chain is tRNA U34 carboxymethyltransferase, found in Pseudomonas syringae pv. tomato (strain ATCC BAA-871 / DC3000).